Consider the following 736-residue polypeptide: Elongation factor 2 (736 aa).

Residues 18–234 enclose the tr-type G domain; the sequence is TRVRNIGIIA…VIDAYTASDK (217 aa). GTP is bound by residues 27-34, 93-97, and 147-150; these read AHVDHGKT, DTPGH, and NKVD. H603 bears the Diphthamide mark.

Belongs to the TRAFAC class translation factor GTPase superfamily. Classic translation factor GTPase family. EF-G/EF-2 subfamily.

The protein localises to the cytoplasm. Its function is as follows. Catalyzes the GTP-dependent ribosomal translocation step during translation elongation. During this step, the ribosome changes from the pre-translocational (PRE) to the post-translocational (POST) state as the newly formed A-site-bound peptidyl-tRNA and P-site-bound deacylated tRNA move to the P and E sites, respectively. Catalyzes the coordinated movement of the two tRNA molecules, the mRNA and conformational changes in the ribosome. The chain is Elongation factor 2 (fusA) from Saccharolobus solfataricus (strain ATCC 35092 / DSM 1617 / JCM 11322 / P2) (Sulfolobus solfataricus).